The following is a 150-amino-acid chain: D-aminoacyl-tRNA deacylase (150 aa).

A Gly-cisPro motif, important for rejection of L-amino acids motif is present at residues 138–139 (GP).

This sequence belongs to the DTD family. As to quaternary structure, homodimer.

It localises to the cytoplasm. It catalyses the reaction glycyl-tRNA(Ala) + H2O = tRNA(Ala) + glycine + H(+). It carries out the reaction a D-aminoacyl-tRNA + H2O = a tRNA + a D-alpha-amino acid + H(+). In terms of biological role, an aminoacyl-tRNA editing enzyme that deacylates mischarged D-aminoacyl-tRNAs. Also deacylates mischarged glycyl-tRNA(Ala), protecting cells against glycine mischarging by AlaRS. Acts via tRNA-based rather than protein-based catalysis; rejects L-amino acids rather than detecting D-amino acids in the active site. By recycling D-aminoacyl-tRNA to D-amino acids and free tRNA molecules, this enzyme counteracts the toxicity associated with the formation of D-aminoacyl-tRNA entities in vivo and helps enforce protein L-homochirality. The sequence is that of D-aminoacyl-tRNA deacylase from Christiangramia forsetii (strain DSM 17595 / CGMCC 1.15422 / KT0803) (Gramella forsetii).